A 174-amino-acid chain; its full sequence is Small ribosomal subunit protein uS5 (174 aa).

Residues 18 to 81 form the S5 DRBM domain; it reads WQERVIQIRR…ADGKKHLIDI (64 aa).

Belongs to the universal ribosomal protein uS5 family. Part of the 30S ribosomal subunit. Contacts proteins S4 and S8.

Functionally, with S4 and S12 plays an important role in translational accuracy. In terms of biological role, located at the back of the 30S subunit body where it stabilizes the conformation of the head with respect to the body. The polypeptide is Small ribosomal subunit protein uS5 (Trichormus variabilis (strain ATCC 29413 / PCC 7937) (Anabaena variabilis)).